Consider the following 84-residue polypeptide: MNSLLKVAVVCLVMLVACSSGRVVLPDDADTEYNSEYALAKRVNCKCEGGHEEGTYWVFGCPKNWYSCKSGYVYGRCCSQQWGK.

The N-terminal stretch at 1 to 21 (MNSLLKVAVVCLVMLVACSSG) is a signal peptide. 3 disulfide bridges follow: C45-C77, C47-C68, and C61-C78.

Expressed in ectodermal gland cells. In adult female tissues, highly transcribed in mesenteries (gametes-producing tissue) and slightly transcribed in tentacles, pharynx and physa.

Its function is as follows. Has toxic effects on zebrafish larvae. It causes contractile paralysis and twitching of the tail within 20 minutes, followed by death within 30 minutes. Does not show any toxicity when injected into arthropods (cherry shrimps or grass shrimps). This is N.vectensis toxin 5 from Nematostella vectensis (Starlet sea anemone).